The chain runs to 701 residues: C6 finger domain transcription factor nscR (701 aa).

Positions cysteine 17 to cysteine 43 form a DNA-binding region, zn(2)-C6 fungal-type.

It is found in the nucleus. Transcription factor that specifically regulates the neosartoricin B biosynthesis gene cluster. This Arthroderma gypseum (strain ATCC MYA-4604 / CBS 118893) (Microsporum gypseum) protein is C6 finger domain transcription factor nscR.